Reading from the N-terminus, the 76-residue chain is Putative Fe(2+) transport protein A (76 aa).

This sequence belongs to the FeoA family.

Its function is as follows. Might be involved in Fe(2+) ion uptake. The polypeptide is Putative Fe(2+) transport protein A (Helicobacter pylori (strain ATCC 700392 / 26695) (Campylobacter pylori)).